We begin with the raw amino-acid sequence, 314 residues long: Porphobilinogen deaminase (314 aa).

The residue at position 234 (cysteine 234) is an S-(dipyrrolylmethanemethyl)cysteine.

This sequence belongs to the HMBS family. In terms of assembly, monomer. The cofactor is dipyrromethane.

The catalysed reaction is 4 porphobilinogen + H2O = hydroxymethylbilane + 4 NH4(+). Its pathway is porphyrin-containing compound metabolism; protoporphyrin-IX biosynthesis; coproporphyrinogen-III from 5-aminolevulinate: step 2/4. In terms of biological role, tetrapolymerization of the monopyrrole PBG into the hydroxymethylbilane pre-uroporphyrinogen in several discrete steps. The chain is Porphobilinogen deaminase from Mycobacterium marinum (strain ATCC BAA-535 / M).